Consider the following 280-residue polypeptide: Formyltetrahydrofolate deformylase (280 aa).

Residues 8–86 (VLRTICPDQK…RELNPAGRRR (79 aa)) enclose the ACT domain. Residue Asp225 is part of the active site.

This sequence belongs to the PurU family.

The enzyme catalyses (6R)-10-formyltetrahydrofolate + H2O = (6S)-5,6,7,8-tetrahydrofolate + formate + H(+). It functions in the pathway purine metabolism; IMP biosynthesis via de novo pathway; formate from 10-formyl-5,6,7,8-tetrahydrofolate: step 1/1. Its function is as follows. Catalyzes the hydrolysis of 10-formyltetrahydrofolate (formyl-FH4) to formate and tetrahydrofolate (FH4). In Escherichia coli O6:H1 (strain CFT073 / ATCC 700928 / UPEC), this protein is Formyltetrahydrofolate deformylase.